Consider the following 336-residue polypeptide: MSWNLLFVLLIGFVVLILLSPVFKSTWPFSTFYRNVFQPFLVDDQKYRWKLHLVPLFYTSIYLYLVYTYHMRVESTIKNELFLLERILIVPIIILPPVALGILAMVSRAEDSKDHKSGSTEEYPYDYLLYYPAIKCSTCRIVKPARSKHCSICNRCVLVADHHCIWINNCIGKGNYLQFYLFLISNIFSMCYAFLRLWYISLNSTSTLPRAVLTLTILCGCFTIICAIFTYLQLAIVKEGMTTNEQDKWYTIQEYMREGKLVRSLDDDCPSWFFKCTEQKDDAAEPLQDQHVTFYSTNAYDHKHYNLTHYITIKDASEIPNIYDKGTFLANLTDLI.

Topologically, residues 1 to 2 (MS) are lumenal. Residues 3–23 (WNLLFVLLIGFVVLILLSPVF) traverse the membrane as a helical segment. The Cytoplasmic segment spans residues 24–50 (KSTWPFSTFYRNVFQPFLVDDQKYRWK). A helical transmembrane segment spans residues 51 to 71 (LHLVPLFYTSIYLYLVYTYHM). At 72 to 86 (RVESTIKNELFLLER) the chain is on the lumenal side. The chain crosses the membrane as a helical span at residues 87-107 (ILIVPIIILPPVALGILAMVS). The Cytoplasmic segment spans residues 108–179 (RAEDSKDHKS…CIGKGNYLQF (72 aa)). The DHHC domain occupies 134 to 184 (IKCSTCRIVKPARSKHCSICNRCVLVADHHCIWINNCIGKGNYLQFYLFLI). Residues 180 to 200 (YLFLISNIFSMCYAFLRLWYI) traverse the membrane as a helical segment. The Lumenal portion of the chain corresponds to 201–216 (SLNSTSTLPRAVLTLT). Residues 217-237 (ILCGCFTIICAIFTYLQLAIV) form a helical membrane-spanning segment. At 238–336 (KEGMTTNEQD…TFLANLTDLI (99 aa)) the chain is on the cytoplasmic side.

It belongs to the DHHC palmitoyltransferase family. SWF1 subfamily.

The protein resides in the endoplasmic reticulum membrane. It catalyses the reaction L-cysteinyl-[protein] + hexadecanoyl-CoA = S-hexadecanoyl-L-cysteinyl-[protein] + CoA. Its function is as follows. Palmitoyltransferase that targets several endosomal SNAREs. Palmitoylates the SNAREs SNC1, SNC2, SYN8 and TLG1, at cysteine residues close to the cytoplasmic end of their transmembrane domain. May have a role in the cellular quality control of transmembrane domain-containing proteins. In Saccharomyces cerevisiae (strain ATCC 204508 / S288c) (Baker's yeast), this protein is Palmitoyltransferase SWF1 (SWF1).